The sequence spans 140 residues: Calcitonin (140 aa).

An N-terminal signal peptide occupies residues 1–25; that stretch reads MGFWKFSPFLPLSILVLYQVGIIQA. Residues 26–81 constitute a propeptide that is removed on maturation; that stretch reads APFRSALESLPDPAVLPEEESRLLLAALVKDYVQMKVRALEQEQETGGASLDSPRA. C84 and C90 are joined by a disulfide. P115 carries the post-translational modification Proline amide. The propeptide occupies 120–140; it reads VMARGLERDHGPHIGTSQDAY.

The protein belongs to the calcitonin family.

It is found in the secreted. Its function is as follows. Calcitonin is a peptide hormone that causes a rapid but short-lived drop in the level of calcium and phosphate in blood by promoting the incorporation of those ions in the bones. Calcitonin function is mediated by the calcitonin receptor/CALCR and the CALCR-RAMP2 (AMYR2) receptor complex. The protein is Calcitonin (CALCA) of Equus caballus (Horse).